A 500-amino-acid chain; its full sequence is Arabinofuranosidase/B-xylosidase (500 aa).

The signal sequence occupies residues 1-21; the sequence is MLSNARIIAAGCIAAGSLVAA. Residue Asn467 is glycosylated (N-linked (GlcNAc...) asparagine).

The protein belongs to the glycosyl hydrolase 54 family.

It catalyses the reaction Hydrolysis of terminal non-reducing alpha-L-arabinofuranoside residues in alpha-L-arabinosides.. It carries out the reaction Hydrolysis of (1-&gt;4)-beta-D-xylans, to remove successive D-xylose residues from the non-reducing termini.. This chain is Arabinofuranosidase/B-xylosidase (xyl1), found in Trichoderma koningii (Hypocrea koningii).